The sequence spans 236 residues: Growth-regulating factor 12 (236 aa).

A disordered region spans residues 1–27 (MLAEGRQVYLPPPPPSKLPRLSGTDPT). The region spanning 74-109 (ALTFMQRQELEQQVLIYRYFAAGAPVPVHLVLPIWK) is the QLQ domain. Positions 140 to 184 (EPEPGRCRRTDGKKWRCSRDVVPGHKYCERHVHRGRGRSRKPMEA) constitute a WRC domain. 2 short sequence motifs (bipartite nuclear localization signal) span residues 145 to 155 (RCRRTDGKKWR) and 173 to 180 (RGRGRSRK).

Belongs to the GRF family.

It is found in the nucleus. Transcription activator that plays a regulatory role in gibberellin-induced stem elongation. The protein is Growth-regulating factor 12 (GRF12) of Oryza sativa subsp. japonica (Rice).